The sequence spans 807 residues: Tyrosine-protein phosphatase non-receptor type 22 (807 aa).

Positions 24–289 (FANEFLKLKR…ELVYNAVLEL (266 aa)) constitute a Tyrosine-protein phosphatase domain. Ser-35 bears the Phosphoserine; by PKC/PRKCD mark. Cys-129 and Cys-227 are oxidised to a cystine. Cys-227 functions as the Phosphocysteine intermediate in the catalytic mechanism. Substrate-binding positions include 227 to 233 (CSAGCGR) and Gln-274. Phosphoserine is present on residues Ser-449, Ser-635, Ser-684, and Ser-692. Disordered regions lie at residues 676 to 700 (SVKL…LPER) and 724 to 746 (SYPD…GKSF).

This sequence belongs to the protein-tyrosine phosphatase family. Non-receptor class 4 subfamily. As to quaternary structure, interacts with CSK. Interacts with LPXN. Interacts with CBL. Interacts with TRAF3 (via MATH domain); the interaction promotes TRAF3 polyubiquitination. In terms of processing, phosphorylation on Ser-35 by PKC/PRKCD abrogates its ability to dephosphorylate and inactivate the SRC family kinases. Expressed in bone marrow, B and T-cells, PBMCs, natural killer cells, monocytes, dendritic cells and neutrophils. Both isoform 1 and 4 are predominantly expressed in lymphoid tissues and cells. Isoform 1 is expressed in thymocytes and both mature B and T-cells.

The protein localises to the cytoplasm. It carries out the reaction O-phospho-L-tyrosyl-[protein] + H2O = L-tyrosyl-[protein] + phosphate. It catalyses the reaction N-(5Z,8Z,11Z,14Z-eicosatetraenoyl)-ethanolamine phosphate + H2O = N-(5Z,8Z,11Z,14Z-eicosatetraenoyl)-ethanolamine + phosphate. With respect to regulation, down-regulated by phosphorylation. Its function is as follows. Acts as a negative regulator of T-cell receptor (TCR) signaling by direct dephosphorylation of the Src family kinases LCK and FYN, ITAMs of the TCRz/CD3 complex, as well as ZAP70, VAV, VCP and other key signaling molecules. Associates with and probably dephosphorylates CBL. Dephosphorylates LCK at its activating 'Tyr-394' residue. Dephosphorylates ZAP70 at its activating 'Tyr-493' residue. Dephosphorylates the immune system activator SKAP2. Positively regulates toll-like receptor (TLR)-induced type 1 interferon production. Promotes host antiviral responses mediated by type 1 interferon. Regulates NOD2-induced pro-inflammatory cytokine secretion and autophagy. Acts as an activator of NLRP3 inflammasome assembly by mediating dephosphorylation of 'Tyr-861' of NLRP3. Dephosphorylates phospho-anandamide (p-AEA), an endocannabinoid to anandamide (also called N-arachidonoylethanolamide). In Homo sapiens (Human), this protein is Tyrosine-protein phosphatase non-receptor type 22 (PTPN22).